The sequence spans 577 residues: ABC transporter G family member 4 (577 aa).

An ABC transporter domain is found at 6 to 248 (LSTSSISYAK…LLSKGFTVPS (243 aa)). 48–55 (GPSGAGKS) contributes to the ATP binding site. An ABC transmembrane type-2 domain is found at 299-509 (TEISLLSSRF…ALDALLINEY (211 aa)). 7 consecutive transmembrane segments (helical) span residues 318–338 (LLLTNILESLVVGLVLGTIYL), 353–373 (LFAFTLTFLLSSTTQTLPIFI), 400–420 (VFLPYLLLIAIIYSVSLYFLV), 429–449 (LAYFVLVIWIIVLMANSFVLF), 458–478 (IAGTSSVTILLAAFFLFSGYF), 487–507 (YWLFMYFFSMYKYALDALLIN), and 548–568 (FNVYMLLGFFVLYRVLCFLVL).

Belongs to the ABC transporter superfamily. ABCG family. Eye pigment precursor importer (TC 3.A.1.204) subfamily.

The protein resides in the membrane. The polypeptide is ABC transporter G family member 4 (ABCG4) (Arabidopsis thaliana (Mouse-ear cress)).